An 85-amino-acid chain; its full sequence is Large ribosomal subunit protein bL27 (85 aa).

Positions Met1–Gly22 are disordered.

The protein belongs to the bacterial ribosomal protein bL27 family.

This Escherichia coli O6:K15:H31 (strain 536 / UPEC) protein is Large ribosomal subunit protein bL27.